The chain runs to 333 residues: Holliday junction branch migration complex subunit RuvB (333 aa).

The tract at residues Met1–Tyr182 is large ATPase domain (RuvB-L). ATP is bound by residues Leu21, Arg22, Gly63, Lys66, Thr67, Thr68, Glu129–Tyr131, Arg172, Tyr182, and Arg219. Thr67 is a Mg(2+) binding site. Residues His183–Gln253 form a small ATPAse domain (RuvB-S) region. Residues Arg256–Arg333 form a head domain (RuvB-H) region. The DNA site is built by Arg311 and Arg316.

It belongs to the RuvB family. Homohexamer. Forms an RuvA(8)-RuvB(12)-Holliday junction (HJ) complex. HJ DNA is sandwiched between 2 RuvA tetramers; dsDNA enters through RuvA and exits via RuvB. An RuvB hexamer assembles on each DNA strand where it exits the tetramer. Each RuvB hexamer is contacted by two RuvA subunits (via domain III) on 2 adjacent RuvB subunits; this complex drives branch migration. In the full resolvosome a probable DNA-RuvA(4)-RuvB(12)-RuvC(2) complex forms which resolves the HJ.

It localises to the cytoplasm. It carries out the reaction ATP + H2O = ADP + phosphate + H(+). Its function is as follows. The RuvA-RuvB-RuvC complex processes Holliday junction (HJ) DNA during genetic recombination and DNA repair, while the RuvA-RuvB complex plays an important role in the rescue of blocked DNA replication forks via replication fork reversal (RFR). RuvA specifically binds to HJ cruciform DNA, conferring on it an open structure. The RuvB hexamer acts as an ATP-dependent pump, pulling dsDNA into and through the RuvAB complex. RuvB forms 2 homohexamers on either side of HJ DNA bound by 1 or 2 RuvA tetramers; 4 subunits per hexamer contact DNA at a time. Coordinated motions by a converter formed by DNA-disengaged RuvB subunits stimulates ATP hydrolysis and nucleotide exchange. Immobilization of the converter enables RuvB to convert the ATP-contained energy into a lever motion, pulling 2 nucleotides of DNA out of the RuvA tetramer per ATP hydrolyzed, thus driving DNA branch migration. The RuvB motors rotate together with the DNA substrate, which together with the progressing nucleotide cycle form the mechanistic basis for DNA recombination by continuous HJ branch migration. Branch migration allows RuvC to scan DNA until it finds its consensus sequence, where it cleaves and resolves cruciform DNA. In Geobacillus kaustophilus (strain HTA426), this protein is Holliday junction branch migration complex subunit RuvB.